Reading from the N-terminus, the 284-residue chain is MLIIETLPLLRQQIRRWRQEGKRIALVPTMGNLHEGHMTLVDEAKTRADVVVVTIFVNPLQFERPDDLAHYPRTLQEDCEKLTRHGADLVFAPAAADIYPAGLEKQTYVDVPALSTILEGASRPGHFRGVSTIVSKLFNLIQPDVACFGEKDYQQLALIRKMVADMGYDINIVGVPTVRAKDGLALSSRNGYLTEEERQIAPQLSKIMWALAEKMALGERQIDALLEEAAAQLLRVGFTPDELFIRDAETLQPLTVDSQQAVILMAAWLGKARLIDNQLVDLRH.

30 to 37 (MGNLHEGH) serves as a coordination point for ATP. His-37 functions as the Proton donor in the catalytic mechanism. Gln-61 lines the (R)-pantoate pocket. Gln-61 is a binding site for beta-alanine. 149 to 152 (GEKD) is an ATP binding site. Gln-155 is a binding site for (R)-pantoate. ATP is bound by residues Val-178 and 186–189 (LSSR).

Belongs to the pantothenate synthetase family. Homodimer.

The protein localises to the cytoplasm. The catalysed reaction is (R)-pantoate + beta-alanine + ATP = (R)-pantothenate + AMP + diphosphate + H(+). It participates in cofactor biosynthesis; (R)-pantothenate biosynthesis; (R)-pantothenate from (R)-pantoate and beta-alanine: step 1/1. In terms of biological role, catalyzes the condensation of pantoate with beta-alanine in an ATP-dependent reaction via a pantoyl-adenylate intermediate. This chain is Pantothenate synthetase, found in Yersinia pestis bv. Antiqua (strain Antiqua).